A 135-amino-acid chain; its full sequence is Protein KRTCAP2 homolog (135 aa).

The next 4 helical transmembrane spans lie at 1 to 21 (MAVS…LLFA), 35 to 55 (PMAI…LTAI), 69 to 89 (TKLI…SGMV), and 93 to 113 (CITT…RISI).

This sequence belongs to the KRTCAP2 family. Component of the oligosaccharyltransferase (OST) complex.

Its subcellular location is the membrane. Subunit of the oligosaccharyl transferase (OST) complex that catalyzes the initial transfer of a defined glycan (Glc(3)Man(9)GlcNAc(2) in eukaryotes) from the lipid carrier dolichol-pyrophosphate to an asparagine residue within an Asn-X-Ser/Thr consensus motif in nascent polypeptide chains, the first step in protein N-glycosylation. N-glycosylation occurs cotranslationally and the complex associates with the Sec61 complex at the channel-forming translocon complex that mediates protein translocation across the endoplasmic reticulum (ER). All subunits are required for a maximal enzyme activity. The sequence is that of Protein KRTCAP2 homolog from Ixodes scapularis (Black-legged tick).